The sequence spans 68 residues: Copper transport protein ATOX1 (68 aa).

An HMA domain is found at 1-63 (MPKHEFSVDM…TLGKTGKAVS (63 aa)). 2 residues coordinate Cu cation: Cys12 and Cys15. Ser47 is modified (phosphoserine). Lys60 carries the N6-acetyllysine modification.

It belongs to the ATX1 family. In terms of assembly, homodimer. Interacts with ATP7B. Interacts with ATP7A. Interacts (via dimer form) with SLC31A1 (via C-terminal domain); this interaction improves ATOX1 stability and controls intracellular Cu(I) levels.

Binds and deliver cytosolic copper to the copper ATPase proteins. May be important in cellular antioxidant defense. This chain is Copper transport protein ATOX1, found in Bos taurus (Bovine).